The primary structure comprises 129 residues: Small ribosomal subunit protein uS11 (129 aa).

The protein belongs to the universal ribosomal protein uS11 family. Part of the 30S ribosomal subunit. Interacts with proteins S7 and S18. Binds to IF-3.

Functionally, located on the platform of the 30S subunit, it bridges several disparate RNA helices of the 16S rRNA. Forms part of the Shine-Dalgarno cleft in the 70S ribosome. The chain is Small ribosomal subunit protein uS11 from Zymomonas mobilis subsp. mobilis (strain ATCC 31821 / ZM4 / CP4).